The chain runs to 904 residues: Envelope glycoprotein B (904 aa).

The signal sequence occupies residues 1 to 22; that stretch reads MRGGGLICALVVGALVAAVASA. Over 23–771 the chain is Virion surface; sequence APAAPAAPRA…SGVSSFMSNP (749 aa). Residues 40–83 are disordered; that stretch reads VAANGGPASRPPPVPSPATTKARKRKTKKPPKRPEATPPPDANA. A compositionally biased stretch (basic residues) spans 60–70; sequence KARKRKTKKPP. N-linked (GlcNAc...) asparagine; by host glycans are attached at residues Asn82 and Asn136. 5 disulfide bridges follow: Cys111–Cys570, Cys128–Cys526, Cys202–Cys266, Cys359–Cys407, and Cys593–Cys630. 2 involved in fusion and/or binding to host membrane regions span residues 168–174 and 253–260; these read VWFGHRY and RVEAFHRY. N-linked (GlcNAc...) asparagine; by host glycosylation is found at Asn393, Asn425, and Asn486. The interval 467–490 is disordered; sequence QDRKPRNATPAPLREAPSANASVE. Asn671 carries an N-linked (GlcNAc...) asparagine; by host glycan. Hydrophobic membrane proximal region stretches follow at residues 716–769 and 728–768; these read IDTV…SFMS and MFAG…SSFM. The chain crosses the membrane as a helical span at residues 772–792; it reads FGALAVGLLVLAGLVAAFFAF. Topologically, residues 793 to 904 are intravirion; sequence RYVLQLQRNP…EDEAGDEDEL (112 aa). The disordered stretch occupies residues 816 to 835; the sequence is TSDPGGVGGEGEEGAEGGGF. A Golgi targeting motif is present at residues 849–852; that stretch reads YMAL. The disordered stretch occupies residues 883-904; the sequence is KRNKARYSPLHNEDEAGDEDEL. Positions 889-892 match the Internalization motif motif; the sequence is YSPL.

The protein belongs to the herpesviridae glycoprotein B family. As to quaternary structure, homotrimer; disulfide-linked. Binds to heparan sulfate proteoglycans. Interacts with gH/gL heterodimer.

The protein localises to the virion membrane. Its subcellular location is the host cell membrane. It localises to the host endosome membrane. The protein resides in the host Golgi apparatus membrane. In terms of biological role, envelope glycoprotein that forms spikes at the surface of virion envelope. Essential for the initial attachment to heparan sulfate moieties of the host cell surface proteoglycans. Involved in fusion of viral and cellular membranes leading to virus entry into the host cell. Following initial binding to its host receptors, membrane fusion is mediated by the fusion machinery composed at least of gB and the heterodimer gH/gL. May be involved in the fusion between the virion envelope and the outer nuclear membrane during virion egress. This Homo sapiens (Human) protein is Envelope glycoprotein B.